We begin with the raw amino-acid sequence, 114 residues long: Large ribosomal subunit protein uL24 (114 aa).

The protein belongs to the universal ribosomal protein uL24 family. Part of the 50S ribosomal subunit.

One of two assembly initiator proteins, it binds directly to the 5'-end of the 23S rRNA, where it nucleates assembly of the 50S subunit. In terms of biological role, one of the proteins that surrounds the polypeptide exit tunnel on the outside of the subunit. This Acidothermus cellulolyticus (strain ATCC 43068 / DSM 8971 / 11B) protein is Large ribosomal subunit protein uL24.